The primary structure comprises 155 residues: Small ribosomal subunit protein uS7cz/uS7cy (155 aa).

This sequence belongs to the universal ribosomal protein uS7 family. In terms of assembly, part of the 30S ribosomal subunit.

It is found in the plastid. The protein localises to the chloroplast. Its function is as follows. One of the primary rRNA binding proteins, it binds directly to 16S rRNA where it nucleates assembly of the head domain of the 30S subunit. This is Small ribosomal subunit protein uS7cz/uS7cy (rps7-A) from Lactuca sativa (Garden lettuce).